The chain runs to 148 residues: UPF0756 membrane protein YeaL (148 aa).

4 helical membrane passes run 14–34 (ALGF…LIIV), 51–71 (LSIG…SGTL), 86–106 (LVAI…VTLM), and 121–141 (VLGV…AGLV).

Belongs to the UPF0756 family.

Its subcellular location is the cell membrane. The chain is UPF0756 membrane protein YeaL from Shigella dysenteriae serotype 1 (strain Sd197).